The primary structure comprises 337 residues: Glyceraldehyde-3-phosphate dehydrogenase (337 aa).

NAD(+)-binding positions include 12-13, Asp34, and Arg79; that span reads RI. D-glyceraldehyde 3-phosphate-binding positions include 150-152, Thr181, 210-211, and Arg233; these read SCT and TG. Cys151 serves as the catalytic Nucleophile. Asn315 is an NAD(+) binding site.

Belongs to the glyceraldehyde-3-phosphate dehydrogenase family. Homotetramer.

The protein resides in the cytoplasm. The catalysed reaction is D-glyceraldehyde 3-phosphate + phosphate + NAD(+) = (2R)-3-phospho-glyceroyl phosphate + NADH + H(+). It functions in the pathway carbohydrate degradation; glycolysis; pyruvate from D-glyceraldehyde 3-phosphate: step 1/5. This chain is Glyceraldehyde-3-phosphate dehydrogenase (GPD), found in Coccidioides immitis (strain RS) (Valley fever fungus).